Consider the following 517-residue polypeptide: 2-isopropylmalate synthase (517 aa).

Positions 7–269 (VIIFDTTLRD…ETGIDTTQIV (263 aa)) constitute a Pyruvate carboxyltransferase domain. Mn(2+)-binding residues include Asp-16, His-204, His-206, and Asn-240. The regulatory domain stretch occupies residues 395–517 (KFISQKISTE…KPKAQGSGTI (123 aa)).

The protein belongs to the alpha-IPM synthase/homocitrate synthase family. LeuA type 1 subfamily. Homodimer. Mn(2+) is required as a cofactor.

Its subcellular location is the cytoplasm. It carries out the reaction 3-methyl-2-oxobutanoate + acetyl-CoA + H2O = (2S)-2-isopropylmalate + CoA + H(+). Its pathway is amino-acid biosynthesis; L-leucine biosynthesis; L-leucine from 3-methyl-2-oxobutanoate: step 1/4. In terms of biological role, catalyzes the condensation of the acetyl group of acetyl-CoA with 3-methyl-2-oxobutanoate (2-ketoisovalerate) to form 3-carboxy-3-hydroxy-4-methylpentanoate (2-isopropylmalate). The chain is 2-isopropylmalate synthase from Neisseria meningitidis serogroup A / serotype 4A (strain DSM 15465 / Z2491).